We begin with the raw amino-acid sequence, 573 residues long: MSKQIKGIAASEGISLARALVIKETKLDIQKQLISDVDQEIIKLEQAIEKSIADLKKIQQITLKKLGEEKAAIFDAHQDIANDPAIKEEVVELIKKEKVNAEYALFTVSNNYFEMFSQLEDPYFKERSADIKDVSLRIISHILGLEIHDLSTIDKEVIIISDDLTPSQTAQLDKKFVKGFLTNVGGRTSHAAIMARSLEIPAILGLKNITELVKTDDLIALDGSSGIVELDLNDDDIKNYQTKVQQYIELKEQLKKFKDEPSLTKDKIKKLIEANIGSTNDVQSVLDSGAEGIGLFRTEFLYMDNDHFPTEEEQFEAYKKVVSQIKHLVVFRTLDIGGDKKLSYFKFDEEMNPFLGYRAIRFTLDRKDIFKDQIRALLRASAFGKLGIMFPMIATIDEFKQAKTFVEECKIELDKEGIKYDNQVQIGMMVEIPSAAILADQFAKYADFFSIGTNDLIQYSFASDRMNQNVSYLYQPLNPSLLRLIQLTISGAHKHNKWVGMCGEMAGDSKALPILLGLDLDAFSMSATSVLKARSLMSKIEFSKAKILANKVLECETNEQVNKLVEDFLNNLD.

Histidine 190 acts as the Tele-phosphohistidine intermediate in catalysis. Residues arginine 297 and arginine 332 each contribute to the phosphoenolpyruvate site. Positions 431 and 455 each coordinate Mg(2+). Residues 454 to 455 (ND) and arginine 465 each bind phosphoenolpyruvate. The active-site Proton donor is the cysteine 502.

The protein belongs to the PEP-utilizing enzyme family. In terms of assembly, homodimer. Requires Mg(2+) as cofactor.

It localises to the cytoplasm. The enzyme catalyses L-histidyl-[protein] + phosphoenolpyruvate = N(pros)-phospho-L-histidyl-[protein] + pyruvate. Its activity is regulated as follows. Irreversibly inhibited the sulfhydryl reagent N-ethylmaleimide (NEM). General (non sugar-specific) component of the phosphoenolpyruvate-dependent sugar phosphotransferase system (sugar PTS). This major carbohydrate active-transport system catalyzes the phosphorylation of incoming sugar substrates concomitantly with their translocation across the cell membrane. Enzyme I transfers the phosphoryl group from phosphoenolpyruvate (PEP) to the phosphoryl carrier protein (HPr). The protein is Phosphoenolpyruvate-protein phosphotransferase (ptsI) of Mycoplasma capricolum subsp. capricolum (strain California kid / ATCC 27343 / NCTC 10154).